Reading from the N-terminus, the 359-residue chain is Fructose-bisphosphate aldolase (359 aa).

S50 contacts D-glyceraldehyde 3-phosphate. D83 serves as the catalytic Proton donor. H84, D105, E142, and H198 together coordinate Zn(2+). Residue G199 coordinates dihydroxyacetone phosphate. Zn(2+) is bound at residue H232. Dihydroxyacetone phosphate is bound by residues 233-235 (GSS) and 275-278 (NIDT).

It depends on Zn(2+) as a cofactor.

The enzyme catalyses beta-D-fructose 1,6-bisphosphate = D-glyceraldehyde 3-phosphate + dihydroxyacetone phosphate. Its pathway is carbohydrate degradation; glycolysis; D-glyceraldehyde 3-phosphate and glycerone phosphate from D-glucose: step 4/4. In terms of biological role, catalyzes the aldol condensation of dihydroxyacetone phosphate (DHAP or glycerone-phosphate) with glyceraldehyde 3-phosphate (G3P) to form fructose 1,6-bisphosphate (FBP) in gluconeogenesis and the reverse reaction in glycolysis. The protein is Fructose-bisphosphate aldolase of Nostoc sp. (strain PCC 7120 / SAG 25.82 / UTEX 2576).